The primary structure comprises 120 residues: Large ribosomal subunit protein bL19c (120 aa).

It belongs to the bacterial ribosomal protein bL19 family.

It is found in the plastid. It localises to the chloroplast. This Trieres chinensis (Marine centric diatom) protein is Large ribosomal subunit protein bL19c (rpl19).